Reading from the N-terminus, the 246-residue chain is tRNA (guanine-N(1)-)-methyltransferase (246 aa).

Residues Gly113 and 132 to 137 (LGDYVL) each bind S-adenosyl-L-methionine.

It belongs to the RNA methyltransferase TrmD family. In terms of assembly, homodimer.

It localises to the cytoplasm. The enzyme catalyses guanosine(37) in tRNA + S-adenosyl-L-methionine = N(1)-methylguanosine(37) in tRNA + S-adenosyl-L-homocysteine + H(+). Its function is as follows. Specifically methylates guanosine-37 in various tRNAs. The polypeptide is tRNA (guanine-N(1)-)-methyltransferase (Lactiplantibacillus plantarum (strain ATCC BAA-793 / NCIMB 8826 / WCFS1) (Lactobacillus plantarum)).